We begin with the raw amino-acid sequence, 649 residues long: Transcription factor tau 95 kDa subunit (649 aa).

The interval 1 to 21 (MPVEEPLATLSSIPDSSADQA) is disordered. Positions 9-19 (TLSSIPDSSAD) are enriched in polar residues. Residues 221–239 (PSTDFQLPPPPKLSMVGFP) form repeat 1. The segment at 221–419 (PSTDFQLPPP…PPLVFESDTP (199 aa)) is 2 X repeats, Pro-rich. The short motif at 296–300 (AKKTK) is the Nuclear localization signal element. Residues 400–419 (PIVKKNVPKPPPLVFESDTP) form repeat 2. The tract at residues 556 to 612 (IAAGDDFDDNGAITEEPDDAALENEEMDTDQNLKVPASIDDDVDDVDADEEEQESFD) is disordered. 2 stretches are compositionally biased toward acidic residues: residues 560–584 (DDFD…EMDT) and 594–610 (IDDD…EQES). At Ser-617 the chain carries Phosphoserine.

The protein belongs to the TFIIIC subunit 5 family. In terms of assembly, component of the TFIIIC complex composed of TFC1, TFC3, TFC4, TFC6, TFC7 and TFC8. The subunits are organized in two globular domains, tauA and tauB, connected by a proteolysis-sensitive and flexible linker. Interacts with TFC3, TFC4 and TFC6.

Its subcellular location is the nucleus. Its function is as follows. TFIIIC mediates tRNA and 5S RNA gene activation by binding to intragenic promoter elements. Upstream of the transcription start site, TFIIIC assembles the initiation complex TFIIIB-TFIIIC-tDNA, which is sufficient for RNA polymerase III recruitment and function. Part of the tauA domain of TFIIIC that binds boxA DNA promoter sites of tRNA and similar genes. Participates in the interconnection of tauA with tauB via its contacts with TFC3 and TFC6. Serves as a scaffold critical for tauA-DNA spatial configuration and tauB-DNA stability. This chain is Transcription factor tau 95 kDa subunit (TFC1), found in Saccharomyces cerevisiae (strain ATCC 204508 / S288c) (Baker's yeast).